A 258-amino-acid chain; its full sequence is Exosome complex component Rrp41 (258 aa).

It belongs to the RNase PH family. Rrp41 subfamily. As to quaternary structure, component of the archaeal exosome complex. Forms a hexameric ring-like arrangement composed of 3 Rrp41-Rrp42 heterodimers. The hexameric ring associates with a trimer of Rrp4 and/or Csl4 subunits.

It localises to the cytoplasm. Functionally, catalytic component of the exosome, which is a complex involved in RNA degradation. Has 3'-&gt;5' exoribonuclease activity. Can also synthesize heteromeric RNA-tails. This is Exosome complex component Rrp41 from Archaeoglobus fulgidus (strain ATCC 49558 / DSM 4304 / JCM 9628 / NBRC 100126 / VC-16).